A 498-amino-acid polypeptide reads, in one-letter code: MSTSILRRILDPTRKPKPDAILSISLLTTVSSPPSPPSDPLISDAVSILTHHRSKSRWSTLRSLQPSGFTPSQFSEITLCLRNNPHLSLRFFLFTRRYSLCSHDTHSCSTLIHILSRSRLKSHASEIIRLALRLAATDEDEDRVLKVFRSLIKSYNRCGSAPFVFDLLIKSCLDSKEIDGAVMVMRKLRSRGINAQISTCNALITEVSRRRGASNGYKMYREVFGLDDVSVDEAKKMIGKIKPNATTFNSMMVSFYREGETEMVERIWREMEEEVGCSPNVYSYNVLMEAYCARGLMSEAEKVWEEMKVRGVVYDIVAYNTMIGGLCSNFEVVKAKELFRDMGLKGIECTCLTYEHLVNGYCKAGDVDSGLVVYREMKRKGFEADGLTIEALVEGLCDDRDGQRVVEAADIVKDAVREAMFYPSRNCYELLVKRLCEDGKMDRALNIQAEMVGKGFKPSQETYRAFIDGYGIVGDEETSALLAIEMAESLKLRAEEES.

7 PPR repeats span residues 244 to 274 (NATTFNSMMVSFYREGETEMVERIWREMEEE), 280 to 314 (NVYSYNVLMEAYCARGLMSEAEKVWEEMKVRGVVY), 315 to 349 (DIVAYNTMIGGLCSNFEVVKAKELFRDMGLKGIEC), 350 to 384 (TCLTYEHLVNGYCKAGDVDSGLVVYREMKRKGFEA), 385 to 423 (DGLTIEALVEGLCDDRDGQRVVEAADIVKDAVREAMFYP), 424 to 458 (SRNCYELLVKRLCEDGKMDRALNIQAEMVGKGFKP), and 459 to 489 (SQETYRAFIDGYGIVGDEETSALLAIEMAES).

Belongs to the PPR family. P subfamily.

The chain is Pentatricopeptide repeat-containing protein At2g15980 from Arabidopsis thaliana (Mouse-ear cress).